We begin with the raw amino-acid sequence, 627 residues long: Glyco-Gag protein (627 aa).

Residues 1–63 (LGDVPRTSGA…FLLSVWNRSR (63 aa)) lie on the Cytoplasmic side of the membrane. The helical transmembrane segment at 64–86 (AARLVCCSIVLCCLCLTVFLYLS) threads the bilayer. The Extracellular portion of the chain corresponds to 87 to 627 (ENMGQTVTTP…PQASLLTLDD (541 aa)). N-linked (GlcNAc...) asparagine; by host glycosylation is present at Asn113. Pro residues predominate over residues 199–215 (PPSAPSLPPEPPFPTPP). Disordered regions lie at residues 199-310 (PPSA…RQGG) and 523-627 (RETP…TLDD). Composition is skewed to basic and acidic residues over residues 523–555 (RETP…EKER) and 575–608 (RQDR…DCPK). Residues 593 to 608 (CAYCKEKGHWARDCPK) form a CCHC-type zinc finger.

In terms of processing, glycosylated by host. Cleaved by host near the middle of the molecule, releasing the c-terminal half containing capsid and nucleoprotein domains op GAG.

Its subcellular location is the host cell membrane. Plays a role in viral particle release. Presumably acts by facilitating the fission of the virion bud at the cell surface. May prevent the antiviral activity of murine APOBEC3. The polypeptide is Glyco-Gag protein (Friend murine leukemia virus (isolate 57) (FrMLV)).